Here is a 222-residue protein sequence, read N- to C-terminus: 3-demethoxyubiquinol 3-hydroxylase (222 aa).

Residues glutamate 71, glutamate 101, histidine 104, glutamate 153, glutamate 185, and histidine 188 each coordinate Fe cation.

It belongs to the COQ7 family. The cofactor is Fe cation.

The protein resides in the cell membrane. It carries out the reaction a 5-methoxy-2-methyl-3-(all-trans-polyprenyl)benzene-1,4-diol + AH2 + O2 = a 3-demethylubiquinol + A + H2O. It participates in cofactor biosynthesis; ubiquinone biosynthesis. Catalyzes the hydroxylation of 2-nonaprenyl-3-methyl-6-methoxy-1,4-benzoquinol during ubiquinone biosynthesis. This Bordetella bronchiseptica (strain ATCC BAA-588 / NCTC 13252 / RB50) (Alcaligenes bronchisepticus) protein is 3-demethoxyubiquinol 3-hydroxylase.